A 190-amino-acid chain; its full sequence is Xanthine phosphoribosyltransferase (190 aa).

Xanthine is bound by residues Leu-20 and Asn-27. 128 to 132 (ANGKA) serves as a coordination point for 5-phospho-alpha-D-ribose 1-diphosphate. Lys-156 contributes to the xanthine binding site.

The protein belongs to the purine/pyrimidine phosphoribosyltransferase family. Xpt subfamily. As to quaternary structure, homodimer.

Its subcellular location is the cytoplasm. The enzyme catalyses XMP + diphosphate = xanthine + 5-phospho-alpha-D-ribose 1-diphosphate. It participates in purine metabolism; XMP biosynthesis via salvage pathway; XMP from xanthine: step 1/1. Its function is as follows. Converts the preformed base xanthine, a product of nucleic acid breakdown, to xanthosine 5'-monophosphate (XMP), so it can be reused for RNA or DNA synthesis. This Pseudomonas fluorescens (strain SBW25) protein is Xanthine phosphoribosyltransferase.